Reading from the N-terminus, the 755-residue chain is Cellulose synthase-like protein B4 (755 aa).

Helical transmembrane passes span 24-44 (AVDLTILGLLLSLLLYRILHV) and 49-69 (TVWIVAFLCETCFTFVWLLIT). Active-site residues include Asp-136 and Asp-461. Helical transmembrane passes span 533-556 (AYLYVFSWGLRSIPELFYCLLPAY), 569-589 (VYLGIIITLVGIHCLYTLWEF), 615-635 (LFSVLDVILKLLGISKTVFIV), 674-694 (FLPGTFIVLVNLAALAGCLVG), 702-722 (GSGLAEACGCILVVILFLPFL), and 733-753 (IPFSTLSKAAFLAALFVVLSV).

Belongs to the glycosyltransferase 2 family. Plant cellulose synthase-like B subfamily.

Its subcellular location is the golgi apparatus membrane. Thought to be a Golgi-localized beta-glycan synthase that polymerize the backbones of noncellulosic polysaccharides (hemicelluloses) of plant cell wall. This Arabidopsis thaliana (Mouse-ear cress) protein is Cellulose synthase-like protein B4 (CSLB4).